We begin with the raw amino-acid sequence, 404 residues long: Cysteine desulfurase IscS (404 aa).

Pyridoxal 5'-phosphate is bound by residues 75 to 76 (AT), asparagine 155, glutamine 183, and 203 to 205 (SSH). An N6-(pyridoxal phosphate)lysine modification is found at lysine 206. Threonine 243 is a binding site for pyridoxal 5'-phosphate. The active-site Cysteine persulfide intermediate is the cysteine 328. [2Fe-2S] cluster is bound at residue cysteine 328.

Belongs to the class-V pyridoxal-phosphate-dependent aminotransferase family. NifS/IscS subfamily. As to quaternary structure, homodimer. Forms a heterotetramer with IscU, interacts with other sulfur acceptors. The cofactor is pyridoxal 5'-phosphate.

It localises to the cytoplasm. The enzyme catalyses (sulfur carrier)-H + L-cysteine = (sulfur carrier)-SH + L-alanine. Its pathway is cofactor biosynthesis; iron-sulfur cluster biosynthesis. Functionally, master enzyme that delivers sulfur to a number of partners involved in Fe-S cluster assembly, tRNA modification or cofactor biosynthesis. Catalyzes the removal of elemental sulfur atoms from cysteine to produce alanine. Functions as a sulfur delivery protein for Fe-S cluster synthesis onto IscU, an Fe-S scaffold assembly protein, as well as other S acceptor proteins. The chain is Cysteine desulfurase IscS from Pasteurella multocida (strain Pm70).